A 321-amino-acid chain; its full sequence is MVRIAYLGPEGTFTEAALVRMVAAGLVPETGPDALQRMPVESAPAALAAVRDGGADYACVPIENSIDGSVLPTLDSLAIGVRLQVFAETTLDVTFSIVVKPGRNAADVRTLAAFPVAAAQVRQWLAAHLPAADLRPAYSNADAARQVADGLVDAAVTSPLAAARWGLAALADGVVDESNARTRFVLVGRPGPPPARTGADRTSAVLRIDNQPGALVAALAEFGIRGIDLTRIESRPTRTELGTYLFFVDCVGHIDDEAVAEALKAVHRRCADVRYLGSWPTGPAAGAQPPLVDEASRWLARLRAGKPEQTLVRPDDQGAQA.

The 187-residue stretch at 3–189 folds into the Prephenate dehydratase domain; it reads RIAYLGPEGT…ARTRFVLVGR (187 aa). Residues 203–280 enclose the ACT domain; that stretch reads SAVLRIDNQP…ADVRYLGSWP (78 aa).

In terms of assembly, homodimer.

It catalyses the reaction prephenate + H(+) = 3-phenylpyruvate + CO2 + H2O. The protein operates within amino-acid biosynthesis; L-phenylalanine biosynthesis; phenylpyruvate from prephenate: step 1/1. This is Prephenate dehydratase (pheA) from Mycobacterium bovis (strain ATCC BAA-935 / AF2122/97).